A 274-amino-acid polypeptide reads, in one-letter code: Large ribosomal subunit protein uL2cz/uL2cy (274 aa).

Disordered regions lie at residues 1-33 (MAIHLYKTSTPSTRKRAVDSQGKSNPRNHLIYG) and 223-265 (MNPV…KYND).

Belongs to the universal ribosomal protein uL2 family. As to quaternary structure, part of the 50S ribosomal subunit.

The protein localises to the plastid. Its subcellular location is the chloroplast. The protein is Large ribosomal subunit protein uL2cz/uL2cy (rpl2-A) of Pelargonium hortorum (Common geranium).